Here is a 79-residue protein sequence, read N- to C-terminus: DNA gyrase inhibitor YacG (79 aa).

Cys-7, Cys-10, Cys-26, and Cys-30 together coordinate Zn(2+).

Belongs to the DNA gyrase inhibitor YacG family. Interacts with GyrB. The cofactor is Zn(2+).

Functionally, inhibits all the catalytic activities of DNA gyrase by preventing its interaction with DNA. Acts by binding directly to the C-terminal domain of GyrB, which probably disrupts DNA binding by the gyrase. This chain is DNA gyrase inhibitor YacG, found in Shewanella pealeana (strain ATCC 700345 / ANG-SQ1).